The chain runs to 248 residues: Triosephosphate isomerase (248 aa).

2 residues coordinate substrate: Asn10 and Lys12. Catalysis depends on His95, which acts as the Electrophile. Glu165 acts as the Proton acceptor in catalysis.

Belongs to the triosephosphate isomerase family. Homodimer.

The catalysed reaction is D-glyceraldehyde 3-phosphate = dihydroxyacetone phosphate. The protein operates within carbohydrate biosynthesis; gluconeogenesis. It participates in carbohydrate degradation; glycolysis; D-glyceraldehyde 3-phosphate from glycerone phosphate: step 1/1. The chain is Triosephosphate isomerase (TPI1) from Debaryomyces hansenii (strain ATCC 36239 / CBS 767 / BCRC 21394 / JCM 1990 / NBRC 0083 / IGC 2968) (Yeast).